Reading from the N-terminus, the 332-residue chain is MTTTERSDPAIRHDWTVAQVQAIHDMPLLDLVHRASLVHRAHHDPSDIQRASLLSIKTGGCPEDCGYCSQSAHHKETGVARQRLMPVEAVLREAAAAKAAGATRFCMGAAWRSPKDGPDFDAVLAMVRGVRGLGMEACVTLGMLTPSQAERLAEAGLTAYNHNLDTGPDYYDKIVSTRSYEDRLATLQAVRDAGIGVCCGGIIGMGEGVTDRVAMLQVLANHAPHPESVPINALAAVPGTPLGERPPVDPFEMVRMCATARIVMPRARVRLSAGRRALSREAQVLCFLAGANSIFYGERLLTTANTDADADAQLLRDIGVPVPAISALEAAE.

The 230-residue stretch at 46–275 folds into the Radical SAM core domain; sequence SDIQRASLLS…RARVRLSAGR (230 aa). Cys61, Cys65, and Cys68 together coordinate [4Fe-4S] cluster. Cys106, Cys138, Cys198, and Arg270 together coordinate [2Fe-2S] cluster.

Belongs to the radical SAM superfamily. Biotin synthase family. In terms of assembly, homodimer. [4Fe-4S] cluster is required as a cofactor. It depends on [2Fe-2S] cluster as a cofactor.

The enzyme catalyses (4R,5S)-dethiobiotin + (sulfur carrier)-SH + 2 reduced [2Fe-2S]-[ferredoxin] + 2 S-adenosyl-L-methionine = (sulfur carrier)-H + biotin + 2 5'-deoxyadenosine + 2 L-methionine + 2 oxidized [2Fe-2S]-[ferredoxin]. The protein operates within cofactor biosynthesis; biotin biosynthesis; biotin from 7,8-diaminononanoate: step 2/2. Functionally, catalyzes the conversion of dethiobiotin (DTB) to biotin by the insertion of a sulfur atom into dethiobiotin via a radical-based mechanism. The chain is Biotin synthase from Methylobacterium sp. (strain 4-46).